The primary structure comprises 354 residues: Deubiquitination-protection protein dph1 (354 aa).

Residues 1 to 78 enclose the Ubiquitin-like domain; that stretch reads MTNISLTIKA…SIHLVKTLGQ (78 aa). A UBA domain is found at 309–353; that stretch reads PPEERYAEQLSQLNEMGFVDFERNVQALRRSGGNVQGAIESLLSD.

Functionally, protects ubiquitin chains against dissambly by deubiquitinating enzymes thereby promoting protein degradation. This chain is Deubiquitination-protection protein dph1 (dph1), found in Schizosaccharomyces pombe (strain 972 / ATCC 24843) (Fission yeast).